Here is a 481-residue protein sequence, read N- to C-terminus: Probable glycine dehydrogenase (decarboxylating) subunit 2 (481 aa).

Lys-265 is modified (N6-(pyridoxal phosphate)lysine).

It belongs to the GcvP family. C-terminal subunit subfamily. As to quaternary structure, the glycine cleavage system is composed of four proteins: P, T, L and H. In this organism, the P 'protein' is a heterodimer of two subunits. Pyridoxal 5'-phosphate is required as a cofactor.

It carries out the reaction N(6)-[(R)-lipoyl]-L-lysyl-[glycine-cleavage complex H protein] + glycine + H(+) = N(6)-[(R)-S(8)-aminomethyldihydrolipoyl]-L-lysyl-[glycine-cleavage complex H protein] + CO2. The glycine cleavage system catalyzes the degradation of glycine. The P protein binds the alpha-amino group of glycine through its pyridoxal phosphate cofactor; CO(2) is released and the remaining methylamine moiety is then transferred to the lipoamide cofactor of the H protein. The sequence is that of Probable glycine dehydrogenase (decarboxylating) subunit 2 from Thermosipho melanesiensis (strain DSM 12029 / CIP 104789 / BI429).